A 51-amino-acid chain; its full sequence is Large ribosomal subunit protein eL39 (51 aa).

Belongs to the eukaryotic ribosomal protein eL39 family.

This Methanocaldococcus jannaschii (strain ATCC 43067 / DSM 2661 / JAL-1 / JCM 10045 / NBRC 100440) (Methanococcus jannaschii) protein is Large ribosomal subunit protein eL39 (rpl39e).